The sequence spans 70 residues: Small ribosomal subunit protein bS21 (70 aa).

It belongs to the bacterial ribosomal protein bS21 family.

The polypeptide is Small ribosomal subunit protein bS21 (rpsU) (Helicobacter pylori (strain J99 / ATCC 700824) (Campylobacter pylori J99)).